Reading from the N-terminus, the 126-residue chain is MADITKEDVLEFIANMTVLELSELIKDIEEKFGVSAAAPVAAVAMAGPAAADAEEEKTEFDVILLSAGDKKIQVIKEVRAITGLGLKEAKALVEEAPKAVKEGIAKEDAEKVKEQLEGAGAQVDIK.

The protein belongs to the bacterial ribosomal protein bL12 family. Homodimer. Part of the ribosomal stalk of the 50S ribosomal subunit. Forms a multimeric L10(L12)X complex, where L10 forms an elongated spine to which 2 to 4 L12 dimers bind in a sequential fashion. Binds GTP-bound translation factors.

In terms of biological role, forms part of the ribosomal stalk which helps the ribosome interact with GTP-bound translation factors. Is thus essential for accurate translation. The protein is Large ribosomal subunit protein bL12 of Desulfatibacillum aliphaticivorans.